Here is a 362-residue protein sequence, read N- to C-terminus: Phosphoserine aminotransferase (362 aa).

Arg43 serves as a coordination point for L-glutamate. Residues 77-78, Trp103, Thr153, Asp173, and Gln196 contribute to the pyridoxal 5'-phosphate site; that span reads AT. Lys197 carries the post-translational modification N6-(pyridoxal phosphate)lysine. 238–239 is a pyridoxal 5'-phosphate binding site; sequence NT.

This sequence belongs to the class-V pyridoxal-phosphate-dependent aminotransferase family. SerC subfamily. Homodimer. Pyridoxal 5'-phosphate is required as a cofactor.

The protein resides in the cytoplasm. The catalysed reaction is O-phospho-L-serine + 2-oxoglutarate = 3-phosphooxypyruvate + L-glutamate. It catalyses the reaction 4-(phosphooxy)-L-threonine + 2-oxoglutarate = (R)-3-hydroxy-2-oxo-4-phosphooxybutanoate + L-glutamate. Its pathway is amino-acid biosynthesis; L-serine biosynthesis; L-serine from 3-phospho-D-glycerate: step 2/3. It participates in cofactor biosynthesis; pyridoxine 5'-phosphate biosynthesis; pyridoxine 5'-phosphate from D-erythrose 4-phosphate: step 3/5. Catalyzes the reversible conversion of 3-phosphohydroxypyruvate to phosphoserine and of 3-hydroxy-2-oxo-4-phosphonooxybutanoate to phosphohydroxythreonine. The sequence is that of Phosphoserine aminotransferase from Xylella fastidiosa (strain 9a5c).